The following is a 123-amino-acid chain: ATP synthase epsilon chain (123 aa).

Belongs to the ATPase epsilon chain family. In terms of assembly, F-type ATPases have 2 components, CF(1) - the catalytic core - and CF(0) - the membrane proton channel. CF(1) has five subunits: alpha(3), beta(3), gamma(1), delta(1), epsilon(1). CF(0) has three main subunits: a, b and c.

It is found in the cell membrane. In terms of biological role, produces ATP from ADP in the presence of a proton gradient across the membrane. This is ATP synthase epsilon chain from Corynebacterium diphtheriae (strain ATCC 700971 / NCTC 13129 / Biotype gravis).